Consider the following 376-residue polypeptide: Homocitrate synthase (376 aa).

The region spanning 4-259 (WKIIDSTLRE…RRKYKLEMLP (256 aa)) is the Pyruvate carboxyltransferase domain. Residue Arg12 coordinates 2-oxoglutarate. Glu13 contacts Mg(2+). His72 is a binding site for 2-oxoglutarate. Residue Asp92 participates in L-lysine binding. Residue Arg133 participates in 2-oxoglutarate binding. 2 residues coordinate L-lysine: Ser135 and Thr166. 2-oxoglutarate is bound at residue Thr166. Mg(2+) contacts are provided by His195 and His197. His292 serves as the catalytic Proton acceptor.

This sequence belongs to the alpha-IPM synthase/homocitrate synthase family. Homocitrate synthase LYS20/LYS21 subfamily. In terms of assembly, exists in an equilibrium between monomer and homodimer. Requires Mg(2+) as cofactor. It depends on Mn(2+) as a cofactor.

It is found in the cytoplasm. It catalyses the reaction acetyl-CoA + 2-oxoglutarate + H2O = (2R)-homocitrate + CoA + H(+). It carries out the reaction oxaloacetate + acetyl-CoA + H2O = citrate + CoA + H(+). It participates in amino-acid biosynthesis; L-lysine biosynthesis via AAA pathway; L-alpha-aminoadipate from 2-oxoglutarate: step 1/5. With respect to regulation, is highly and competitively inhibited by lysine that binds to the active site and competes with 2-oxoglutarate. Is also slightly inhibited by arginine and 2-aminoethylcysteine. Catalyzes the aldol-type condensation of 2-oxoglutarate with acetyl-CoA to yield homocitrate. Carries out the first step of the alpha-aminoadipate (AAA) lysine biosynthesis pathway. To a lesser extent, can also use oxaloacetate in place of 2-oxoglutarate, leading to citrate. Does not display 2-isopropylmalate synthase activity since it cannot use 2-oxoisovalerate. The sequence is that of Homocitrate synthase from Thermus thermophilus (strain ATCC BAA-163 / DSM 7039 / HB27).